The following is a 562-amino-acid chain: Alpha-amylase 2 (562 aa).

Asn236 serves as a coordination point for Ca(2+). The active-site Nucleophile is Asp309. Residue Glu338 is the Proton donor of the active site.

This sequence belongs to the glycosyl hydrolase 13 family. Monomer. The cofactor is Ca(2+).

The protein resides in the cytoplasm. The catalysed reaction is Endohydrolysis of (1-&gt;4)-alpha-D-glucosidic linkages in polysaccharides containing three or more (1-&gt;4)-alpha-linked D-glucose units.. This Dictyoglomus thermophilum (strain ATCC 35947 / DSM 3960 / H-6-12) protein is Alpha-amylase 2 (amyB).